We begin with the raw amino-acid sequence, 256 residues long: uncharacterized protein (256 aa).

Residues 1-22 form the signal peptide; the sequence is MNNFRQCALCIGTSVLILLVSG. A lipid anchor (N-palmitoyl cysteine) is attached at Cys23. Cys23 carries S-diacylglycerol cysteine lipidation.

It belongs to the staphylococcal tandem lipoprotein family.

The protein resides in the cell membrane. This is an uncharacterized protein from Staphylococcus aureus (strain bovine RF122 / ET3-1).